Reading from the N-terminus, the 251-residue chain is Hydroxyacylglutathione hydrolase (251 aa).

Zn(2+) contacts are provided by His-53, His-55, Asp-57, His-58, His-110, Asp-127, and His-165.

This sequence belongs to the metallo-beta-lactamase superfamily. Glyoxalase II family. In terms of assembly, monomer. Requires Zn(2+) as cofactor.

The catalysed reaction is an S-(2-hydroxyacyl)glutathione + H2O = a 2-hydroxy carboxylate + glutathione + H(+). It participates in secondary metabolite metabolism; methylglyoxal degradation; (R)-lactate from methylglyoxal: step 2/2. Its function is as follows. Thiolesterase that catalyzes the hydrolysis of S-D-lactoyl-glutathione to form glutathione and D-lactic acid. In Salmonella paratyphi A (strain ATCC 9150 / SARB42), this protein is Hydroxyacylglutathione hydrolase.